The primary structure comprises 162 residues: Dihydrofolate reductase type 3 (162 aa).

In terms of domain architecture, DHFR spans 2–160 (LISLIAALAH…YACEFVTLSR (159 aa)).

It belongs to the dihydrofolate reductase family. In terms of assembly, monomer.

The enzyme catalyses (6S)-5,6,7,8-tetrahydrofolate + NADP(+) = 7,8-dihydrofolate + NADPH + H(+). The protein operates within cofactor biosynthesis; tetrahydrofolate biosynthesis; 5,6,7,8-tetrahydrofolate from 7,8-dihydrofolate: step 1/1. In terms of biological role, key enzyme in folate metabolism. Catalyzes an essential reaction for de novo glycine and purine synthesis, and for DNA precursor synthesis. The polypeptide is Dihydrofolate reductase type 3 (dhfrIII) (Salmonella typhimurium).